Consider the following 447-residue polypeptide: Glutamate--tRNA ligase 1 (447 aa).

Positions 10–20 match the 'HIGH' region motif; it reads PSPTGMLHVGN. Positions 240–244 match the 'KMSKS' region motif; sequence KISKR. An ATP-binding site is contributed by K243.

The protein belongs to the class-I aminoacyl-tRNA synthetase family. Glutamate--tRNA ligase type 1 subfamily. In terms of assembly, monomer.

The protein localises to the cytoplasm. It carries out the reaction tRNA(Glu) + L-glutamate + ATP = L-glutamyl-tRNA(Glu) + AMP + diphosphate. Its function is as follows. Catalyzes the attachment of glutamate to tRNA(Glu) in a two-step reaction: glutamate is first activated by ATP to form Glu-AMP and then transferred to the acceptor end of tRNA(Glu). This is Glutamate--tRNA ligase 1 from Rickettsia massiliae (strain Mtu5).